The following is a 341-amino-acid chain: Retinol dehydrogenase 10 (341 aa).

Residues 3–23 (IVVEFFVVTFKVLWAFVLAAA) traverse the membrane as a helical; Signal-anchor segment. 40 to 64 (LITGAGSGLGRLFALEFARRRALLV) contributes to the NADP(+) binding site. Ser-197 contacts substrate. The Proton acceptor role is filled by Tyr-210.

Belongs to the short-chain dehydrogenases/reductases (SDR) family. As to expression, detected in retinal pigment epithelium (at protein level). Detected in retina, retinal pigment epithelium, and at lower levels in cornea, liver, kidney, pancreas, lung, brain and skeletal muscle.

It is found in the microsome membrane. It localises to the endoplasmic reticulum membrane. The catalysed reaction is all-trans-retinol + NADP(+) = all-trans-retinal + NADPH + H(+). It participates in cofactor metabolism; retinol metabolism. In terms of biological role, retinol dehydrogenase with a clear preference for NADP. Converts all-trans-retinol to all-trans-retinal. Has no detectable activity towards 11-cis-retinol, 9-cis-retinol and 13-cis-retinol. The chain is Retinol dehydrogenase 10 (RDH10) from Bos taurus (Bovine).